A 316-amino-acid chain; its full sequence is Pantothenate kinase (316 aa).

ATP is bound at residue 95–102 (GSVAVGKS).

This sequence belongs to the prokaryotic pantothenate kinase family.

It localises to the cytoplasm. It carries out the reaction (R)-pantothenate + ATP = (R)-4'-phosphopantothenate + ADP + H(+). Its pathway is cofactor biosynthesis; coenzyme A biosynthesis; CoA from (R)-pantothenate: step 1/5. The chain is Pantothenate kinase from Shigella boydii serotype 18 (strain CDC 3083-94 / BS512).